The following is a 138-amino-acid chain: Microneme antigen L2 (138 aa).

2 consecutive PAN domains span residues 9–78 and 82–138; these read CFAH…PRSC and CSDA…SKRA. 6 disulfides stabilise this stretch: C9-C78, C34-C56, C38-C44, C82-C86, C107-C127, and C111-C117. An a carbohydrate-binding site is contributed by S18. Residues K59, Y66, and D71 each contribute to the a carbohydrate site.

Homodimer or heterodimer. Contains six disulfide bonds.

It is found in the cytoplasmic vesicle. Its subcellular location is the secretory vesicle. The protein resides in the microneme. In terms of biological role, galactose-binding lectin. Plays a role in adhesion to the host cell. Has a potential role in invasion of host cells. The protein is Microneme antigen L2 of Sarcocystis muris.